Consider the following 342-residue polypeptide: Anthranilate phosphoribosyltransferase (342 aa).

Residues glycine 79, 82 to 83, threonine 87, 89 to 92, 107 to 115, and serine 119 contribute to the 5-phospho-alpha-D-ribose 1-diphosphate site; these read GD, NVST, and KHGNRSVSS. Glycine 79 provides a ligand contact to anthranilate. Residue serine 91 participates in Mg(2+) binding. Residue asparagine 110 participates in anthranilate binding. Arginine 165 is an anthranilate binding site. Mg(2+) contacts are provided by aspartate 223 and glutamate 224.

The protein belongs to the anthranilate phosphoribosyltransferase family. As to quaternary structure, homodimer. Mg(2+) is required as a cofactor.

The catalysed reaction is N-(5-phospho-beta-D-ribosyl)anthranilate + diphosphate = 5-phospho-alpha-D-ribose 1-diphosphate + anthranilate. It participates in amino-acid biosynthesis; L-tryptophan biosynthesis; L-tryptophan from chorismate: step 2/5. Functionally, catalyzes the transfer of the phosphoribosyl group of 5-phosphorylribose-1-pyrophosphate (PRPP) to anthranilate to yield N-(5'-phosphoribosyl)-anthranilate (PRA). This Aeromonas hydrophila subsp. hydrophila (strain ATCC 7966 / DSM 30187 / BCRC 13018 / CCUG 14551 / JCM 1027 / KCTC 2358 / NCIMB 9240 / NCTC 8049) protein is Anthranilate phosphoribosyltransferase.